We begin with the raw amino-acid sequence, 178 residues long: ATP-dependent protease subunit HslV (178 aa).

Residue T7 is part of the active site. Residues G162, C165, and T168 each coordinate Na(+).

This sequence belongs to the peptidase T1B family. HslV subfamily. A double ring-shaped homohexamer of HslV is capped on each side by a ring-shaped HslU homohexamer. The assembly of the HslU/HslV complex is dependent on binding of ATP.

Its subcellular location is the cytoplasm. The enzyme catalyses ATP-dependent cleavage of peptide bonds with broad specificity.. With respect to regulation, allosterically activated by HslU binding. Its function is as follows. Protease subunit of a proteasome-like degradation complex believed to be a general protein degrading machinery. The polypeptide is ATP-dependent protease subunit HslV (Burkholderia orbicola (strain AU 1054)).